The following is a 303-amino-acid chain: Elongation factor Ts (303 aa).

Residues threonine 81 to valine 84 are involved in Mg(2+) ion dislocation from EF-Tu.

This sequence belongs to the EF-Ts family.

It is found in the cytoplasm. Associates with the EF-Tu.GDP complex and induces the exchange of GDP to GTP. It remains bound to the aminoacyl-tRNA.EF-Tu.GTP complex up to the GTP hydrolysis stage on the ribosome. The polypeptide is Elongation factor Ts (Mesomycoplasma hyopneumoniae (strain J / ATCC 25934 / NCTC 10110) (Mycoplasma hyopneumoniae)).